The following is a 112-amino-acid chain: ATP synthase subunit c (112 aa).

The next 2 helical transmembrane spans lie at 36 to 56 and 81 to 101; these read FSVL…AIGM and MFIA…IALI.

This sequence belongs to the ATPase C chain family. In terms of assembly, F-type ATPases have 2 components, F(1) - the catalytic core - and F(0) - the membrane proton channel. F(1) has five subunits: alpha(3), beta(3), gamma(1), delta(1), epsilon(1). F(0) has three main subunits: a(1), b(2) and c(10-14). The alpha and beta chains form an alternating ring which encloses part of the gamma chain. F(1) is attached to F(0) by a central stalk formed by the gamma and epsilon chains, while a peripheral stalk is formed by the delta and b chains.

It is found in the cell inner membrane. F(1)F(0) ATP synthase produces ATP from ADP in the presence of a proton or sodium gradient. F-type ATPases consist of two structural domains, F(1) containing the extramembraneous catalytic core and F(0) containing the membrane proton channel, linked together by a central stalk and a peripheral stalk. During catalysis, ATP synthesis in the catalytic domain of F(1) is coupled via a rotary mechanism of the central stalk subunits to proton translocation. This is ATP synthase subunit c from Campylobacter jejuni subsp. jejuni serotype O:2 (strain ATCC 700819 / NCTC 11168).